A 353-amino-acid polypeptide reads, in one-letter code: MKIDANKEKALSAVLGQIEKQFGKGSIMKLGENRSMDVETISTGSLSLDVALGAGGLPLGRIVEIYGPESSGKTTLTLEVIAAAQREGKVCAFIDAEHALDPIYAQKLGVDIDNLLCSQPDTGEQALEICDALTRSGAVDVIIVDSVAALTPKAEIEGEIGDSHMGLAARMMSQAMRKLAGNLKQSNTLLIFINQIRMKIGVMFGNPETTTGGNALKFYASVRLDIRRTGAIKDREEVIGNETRVKVVKNKIAAPFKQAEFQILYGEGINRTGELVDLGVMHKLIEKSGAWYSYKGDKIGQGRANAGKYLVENPEIGAEIDQALRAMLLGGGQAVAQSATGDENVDLETGEVF.

67 to 74 (GPESSGKT) serves as a coordination point for ATP.

Belongs to the RecA family.

The protein localises to the cytoplasm. Can catalyze the hydrolysis of ATP in the presence of single-stranded DNA, the ATP-dependent uptake of single-stranded DNA by duplex DNA, and the ATP-dependent hybridization of homologous single-stranded DNAs. It interacts with LexA causing its activation and leading to its autocatalytic cleavage. In Shewanella loihica (strain ATCC BAA-1088 / PV-4), this protein is Protein RecA.